The following is a 418-amino-acid chain: MGYQKIQVPATGDKITVNADMSLSVPKNPIIPFIEGDGIGVDISPVMIKVVDAAVEKAYKGERKIAWMEVYAGEKATQVYDQDTWLPQETLDAVRDYVVSIKGPLTTPVGGGIRSLNVALRQQLDLYVCQRPVRWFEGVPSPVKKPGDVDMVIFRENSEDIYAGVEWKAGSPEAEKVIKFLTEEMGVKKIRFTENCGIGIKPVSQEGTKRLVRKALQYAVDNDRSSVTLVHKGNIMKFTEGAFKDWGYEVARDEFGAELLDGGPWMQFKNPKTGKNVVVKDVIADAMLQQILLRPAEYDVIATLNLNGDYLSDALAAEVGGIGIAPGANLSDSVAMFEATHGTAPKYAGQDKVNPGSLILSAEMMLRHMGWTEAADLIIKGTNGAIAAKTVTYDFERLMDGATLLSCSEFGDAMIAKM.

T106 provides a ligand contact to NADP(+). S115, N117, R121, R131, and R155 together coordinate D-threo-isocitrate. The residue at position 115 (S115) is a Phosphoserine. T193 is subject to Phosphothreonine. D309 provides a ligand contact to Mg(2+). NADP(+) is bound by residues 341 to 347, N354, Y393, and R397; that span reads HGTAPKY.

It belongs to the isocitrate and isopropylmalate dehydrogenases family. As to quaternary structure, homodimer. It depends on Mg(2+) as a cofactor. Mn(2+) serves as cofactor.

It localises to the secreted. The catalysed reaction is D-threo-isocitrate + NADP(+) = 2-oxoglutarate + CO2 + NADPH. Its function is as follows. Catalyzes the oxidative decarboxylation of isocitrate to 2-oxoglutarate and carbon dioxide with the concomitant reduction of NADP(+). This chain is Isocitrate dehydrogenase [NADP] (icd), found in Pseudomonas aeruginosa (strain UCBPP-PA14).